A 371-amino-acid chain; its full sequence is Peptidyl-prolyl cis-trans isomerase CPR6 (371 aa).

A PPIase cyclophilin-type domain is found at 7–174 (FFDISIGGKP…RDVKIDDCGV (168 aa)). TPR repeat units follow at residues 219 to 252 (IETV…LKEY), 270 to 303 (VSIP…EAAD), and 308 to 341 (AKAL…QPND).

This sequence belongs to the cyclophilin-type PPIase family. PPIase D subfamily. In terms of assembly, interacts with RPD3.

It localises to the cytoplasm. The enzyme catalyses [protein]-peptidylproline (omega=180) = [protein]-peptidylproline (omega=0). PPIases accelerate the folding of proteins. It catalyzes the cis-trans isomerization of proline imidic peptide bonds in oligopeptides. The polypeptide is Peptidyl-prolyl cis-trans isomerase CPR6 (CPR6) (Saccharomyces cerevisiae (strain ATCC 204508 / S288c) (Baker's yeast)).